We begin with the raw amino-acid sequence, 236 residues long: Ribonuclease P protein component 3 (236 aa).

This sequence belongs to the eukaryotic/archaeal RNase P protein component 3 family. In terms of assembly, consists of a catalytic RNA component and at least 4-5 protein subunits.

Its subcellular location is the cytoplasm. It carries out the reaction Endonucleolytic cleavage of RNA, removing 5'-extranucleotides from tRNA precursor.. In terms of biological role, part of ribonuclease P, a protein complex that generates mature tRNA molecules by cleaving their 5'-ends. This is Ribonuclease P protein component 3 from Natronomonas pharaonis (strain ATCC 35678 / DSM 2160 / CIP 103997 / JCM 8858 / NBRC 14720 / NCIMB 2260 / Gabara) (Halobacterium pharaonis).